The sequence spans 366 residues: Ribosomal RNA large subunit methyltransferase M (366 aa).

S-adenosyl-L-methionine contacts are provided by residues Ser188, 221-224 (CPGG), Asp240, Asp260, and Asp277. The active-site Proton acceptor is Lys306.

Belongs to the class I-like SAM-binding methyltransferase superfamily. RNA methyltransferase RlmE family. RlmM subfamily. In terms of assembly, monomer.

It is found in the cytoplasm. It catalyses the reaction cytidine(2498) in 23S rRNA + S-adenosyl-L-methionine = 2'-O-methylcytidine(2498) in 23S rRNA + S-adenosyl-L-homocysteine + H(+). In terms of biological role, catalyzes the 2'-O-methylation at nucleotide C2498 in 23S rRNA. This Klebsiella pneumoniae subsp. pneumoniae (strain ATCC 700721 / MGH 78578) protein is Ribosomal RNA large subunit methyltransferase M.